Here is a 256-residue protein sequence, read N- to C-terminus: Triosephosphate isomerase (256 aa).

9-11 lines the substrate pocket; that stretch reads NWK. Residue histidine 97 is the Electrophile of the active site. The active-site Proton acceptor is glutamate 169. Residues glycine 175, serine 214, and 235-236 each bind substrate; that span reads GG.

Belongs to the triosephosphate isomerase family. Homodimer.

The protein resides in the cytoplasm. The catalysed reaction is D-glyceraldehyde 3-phosphate = dihydroxyacetone phosphate. Its pathway is carbohydrate biosynthesis; gluconeogenesis. It functions in the pathway carbohydrate degradation; glycolysis; D-glyceraldehyde 3-phosphate from glycerone phosphate: step 1/1. In terms of biological role, involved in the gluconeogenesis. Catalyzes stereospecifically the conversion of dihydroxyacetone phosphate (DHAP) to D-glyceraldehyde-3-phosphate (G3P). The sequence is that of Triosephosphate isomerase from Aliivibrio salmonicida (strain LFI1238) (Vibrio salmonicida (strain LFI1238)).